The sequence spans 72 residues: Translation initiation factor IF-1 (72 aa).

An S1-like domain is found at methionine 1–lysine 72.

It belongs to the IF-1 family. In terms of assembly, component of the 30S ribosomal translation pre-initiation complex which assembles on the 30S ribosome in the order IF-2 and IF-3, IF-1 and N-formylmethionyl-tRNA(fMet); mRNA recruitment can occur at any time during PIC assembly.

The protein resides in the cytoplasm. Functionally, one of the essential components for the initiation of protein synthesis. Stabilizes the binding of IF-2 and IF-3 on the 30S subunit to which N-formylmethionyl-tRNA(fMet) subsequently binds. Helps modulate mRNA selection, yielding the 30S pre-initiation complex (PIC). Upon addition of the 50S ribosomal subunit IF-1, IF-2 and IF-3 are released leaving the mature 70S translation initiation complex. The chain is Translation initiation factor IF-1 from Campylobacter fetus subsp. fetus (strain 82-40).